The sequence spans 246 residues: Protein YIPF4 (246 aa).

At 1–115 (MQPPGPPPAY…FNRQVVRDNP (115 aa)) the chain is on the cytoplasmic side. The chain crosses the membrane as a helical span at residues 116 to 136 (DFWGPLAVVLFFSMISLYGQF). Residues 137–140 (RVVS) are Lumenal-facing. The chain crosses the membrane as a helical span at residues 141–161 (WIITIWIFGSLTIFLLARVLG). Residues 162-168 (GEVAYGQ) lie on the Cytoplasmic side of the membrane. A helical transmembrane segment spans residues 169–189 (VLGVIGYSLLPLIVIAPILLV). The Lumenal segment spans residues 190 to 197 (VGSFEMVS). A helical transmembrane segment spans residues 198-218 (TLIKLFGVFWAAYSAASLLVG). Residues 219-225 (EEFKTKK) lie on the Cytoplasmic side of the membrane. Residues 226–246 (PLLIYPIFLLYIYFLSLYTGV) form a helical membrane-spanning segment.

The protein belongs to the YIP1 family. Interacts with YIPF3 and YIPF5.

The protein localises to the golgi apparatus. It is found in the cis-Golgi network membrane. In terms of biological role, involved in the maintenance of the Golgi structure. This is Protein YIPF4 (Yipf4) from Mus musculus (Mouse).